A 420-amino-acid polypeptide reads, in one-letter code: Serine hydroxymethyltransferase (420 aa).

Residues Leu121 and 125–127 (GHL) contribute to the (6S)-5,6,7,8-tetrahydrofolate site. Position 229 is an N6-(pyridoxal phosphate)lysine (Lys229).

It belongs to the SHMT family. As to quaternary structure, homodimer. The cofactor is pyridoxal 5'-phosphate.

Its subcellular location is the cytoplasm. The catalysed reaction is (6R)-5,10-methylene-5,6,7,8-tetrahydrofolate + glycine + H2O = (6S)-5,6,7,8-tetrahydrofolate + L-serine. It functions in the pathway one-carbon metabolism; tetrahydrofolate interconversion. Its pathway is amino-acid biosynthesis; glycine biosynthesis; glycine from L-serine: step 1/1. Functionally, catalyzes the reversible interconversion of serine and glycine with tetrahydrofolate (THF) serving as the one-carbon carrier. This reaction serves as the major source of one-carbon groups required for the biosynthesis of purines, thymidylate, methionine, and other important biomolecules. Also exhibits THF-independent aldolase activity toward beta-hydroxyamino acids, producing glycine and aldehydes, via a retro-aldol mechanism. This Aggregatibacter actinomycetemcomitans (Actinobacillus actinomycetemcomitans) protein is Serine hydroxymethyltransferase.